Reading from the N-terminus, the 354-residue chain is Uroporphyrinogen decarboxylase (354 aa).

Substrate contacts are provided by residues 27–31 (RQAGR), aspartate 77, tyrosine 154, threonine 209, and histidine 327.

The protein belongs to the uroporphyrinogen decarboxylase family. In terms of assembly, homodimer.

The protein localises to the cytoplasm. It carries out the reaction uroporphyrinogen III + 4 H(+) = coproporphyrinogen III + 4 CO2. Its pathway is porphyrin-containing compound metabolism; protoporphyrin-IX biosynthesis; coproporphyrinogen-III from 5-aminolevulinate: step 4/4. Its function is as follows. Catalyzes the decarboxylation of four acetate groups of uroporphyrinogen-III to yield coproporphyrinogen-III. The chain is Uroporphyrinogen decarboxylase from Pectobacterium atrosepticum (strain SCRI 1043 / ATCC BAA-672) (Erwinia carotovora subsp. atroseptica).